The following is a 521-amino-acid chain: Bifunctional purine biosynthesis protein PurH (521 aa).

One can recognise an MGS-like domain in the interval 1–147 (MAKISRALIS…KNNADVTVLV (147 aa)).

It belongs to the PurH family.

The enzyme catalyses (6R)-10-formyltetrahydrofolate + 5-amino-1-(5-phospho-beta-D-ribosyl)imidazole-4-carboxamide = 5-formamido-1-(5-phospho-D-ribosyl)imidazole-4-carboxamide + (6S)-5,6,7,8-tetrahydrofolate. It catalyses the reaction IMP + H2O = 5-formamido-1-(5-phospho-D-ribosyl)imidazole-4-carboxamide. It participates in purine metabolism; IMP biosynthesis via de novo pathway; 5-formamido-1-(5-phospho-D-ribosyl)imidazole-4-carboxamide from 5-amino-1-(5-phospho-D-ribosyl)imidazole-4-carboxamide (10-formyl THF route): step 1/1. It functions in the pathway purine metabolism; IMP biosynthesis via de novo pathway; IMP from 5-formamido-1-(5-phospho-D-ribosyl)imidazole-4-carboxamide: step 1/1. This Geotalea daltonii (strain DSM 22248 / JCM 15807 / FRC-32) (Geobacter daltonii) protein is Bifunctional purine biosynthesis protein PurH.